The following is a 236-amino-acid chain: uncharacterized protein (236 aa).

The Response regulatory domain occupies 3 to 116; the sequence is TCLIVDDELF…RLSKTLKRVR (114 aa). Residue D54 is modified to 4-aspartylphosphate. The 101-residue stretch at 135–235 folds into the HTH LytTR-type domain; sequence LPCYSGSKLK…LKSLKQLFGF (101 aa).

This is an uncharacterized protein from Shewanella oneidensis (strain ATCC 700550 / JCM 31522 / CIP 106686 / LMG 19005 / NCIMB 14063 / MR-1).